Consider the following 326-residue polypeptide: Serine protease 38 (326 aa).

Positions 1-32 are cleaved as a signal peptide; that stretch reads MAAPASVMGPLGPSALGLLLLLLVVAPPRVAA. Residues 33–59 constitute a propeptide, activation peptide; sequence LVHRQPENQGISLTGSVACGRPSMEGK. Residues 60 to 293 form the Peptidase S1 domain; the sequence is ILGGVPAPER…FSKWICDNIE (234 aa). A disulfide bridge connects residues Cys-85 and Cys-101. The Charge relay system role is filled by His-100. N-linked (GlcNAc...) asparagine glycosylation occurs at Asn-125. Catalysis depends on Asp-150, which acts as the Charge relay system. Intrachain disulfides connect Cys-183–Cys-251, Cys-214–Cys-230, and Cys-241–Cys-269. Residue Ser-245 is the Charge relay system of the active site.

Belongs to the peptidase S1 family.

Its subcellular location is the secreted. The polypeptide is Serine protease 38 (PRSS38) (Homo sapiens (Human)).